The sequence spans 108 residues: Pumilarin (108 aa).

Residues 1 to 38 constitute a propeptide that is removed on maturation; sequence MTETKNEIKLHVLFGALAVGFLMLALFSFSLQMLPVAD. Residues 39–108 constitute a cross-link (cyclopeptide (Leu-Trp)); sequence LAKEFGIPGS…KKGRKAVIAW (70 aa).

The cross-link permits a high resistance to proteolysis. Is more resistant to specific proteases than to unspecific proteases.

Its subcellular location is the secreted. In terms of biological role, cyclopeptide antibiotic that inhibits both Gram-positive and Gram-negative bacteria. Shows potent to weak activities against M.flavus (MIC=3 ug/ml), B.cereus (MIC=12 ug/ml), B.pumilus (MIC=12 ug/ml), E.coli (MIC=12 ug/ml), and S.pneumoniae (MIC=47 ug/ml). May act by forming pores. This Bacillus safensis protein is Pumilarin.